The sequence spans 383 residues: MESTNRLSAIQTLLVIQRWIGLLKWENEGEDGVLTWLKRIYPFVLHLPLTFTYIALMWYEAITSSDFEEAGQVLYMSITELALVTKLLNIWYRRHEAASLIHELQHDPAFNLRNSEEIKFWQQNQRNFKRIFYWYIWGSLFVAVMGYISVFFQEDYELPFGYYVPFEWRTRERYFYAWGYNVVAMTLCCLSNILLDTLGCYFMFHIASLFRLLGMRLEALKNAAEEKARPELRRIFQLHTKVRRLTRECEVLVSPYVLSQVVFSAFIICFSAYRLVHMGFKQRPGLFVTTVQFVAVMIVQIFLPCYYGNELTFHANALTNSVFGTNWLEYSVGTRKLLNCYMEFLKRPVKVRAGVFFEIGLPIFVKTINNAYSFFALLLKISK.

Over 1 to 41 the chain is Cytoplasmic; the sequence is MESTNRLSAIQTLLVIQRWIGLLKWENEGEDGVLTWLKRIY. Residues 42 to 62 form a helical membrane-spanning segment; it reads PFVLHLPLTFTYIALMWYEAI. Topologically, residues 63 to 70 are extracellular; the sequence is TSSDFEEA. The chain crosses the membrane as a helical span at residues 71–91; it reads GQVLYMSITELALVTKLLNIW. At 92–130 the chain is on the cytoplasmic side; the sequence is YRRHEAASLIHELQHDPAFNLRNSEEIKFWQQNQRNFKR. Residues 131–151 traverse the membrane as a helical segment; sequence IFYWYIWGSLFVAVMGYISVF. At 152-174 the chain is on the extracellular side; the sequence is FQEDYELPFGYYVPFEWRTRERY. The chain crosses the membrane as a helical span at residues 175–195; it reads FYAWGYNVVAMTLCCLSNILL. Residues 196–250 lie on the Cytoplasmic side of the membrane; sequence DTLGCYFMFHIASLFRLLGMRLEALKNAAEEKARPELRRIFQLHTKVRRLTRECE. The chain crosses the membrane as a helical span at residues 251 to 271; the sequence is VLVSPYVLSQVVFSAFIICFS. Residues 272 to 284 lie on the Extracellular side of the membrane; that stretch reads AYRLVHMGFKQRP. Residues 285–305 traverse the membrane as a helical segment; it reads GLFVTTVQFVAVMIVQIFLPC. Topologically, residues 306 to 358 are cytoplasmic; sequence YYGNELTFHANALTNSVFGTNWLEYSVGTRKLLNCYMEFLKRPVKVRAGVFFE. Residues 359–379 form a helical membrane-spanning segment; that stretch reads IGLPIFVKTINNAYSFFALLL. The Extracellular segment spans residues 380–383; that stretch reads KISK.

Belongs to the insect chemoreceptor superfamily. Heteromeric odorant receptor channel (TC 1.A.69) family. Or2a subfamily. As to quaternary structure, interacts with Orco. Complexes exist early in the endomembrane system in olfactory sensory neurons (OSNs), coupling these complexes to the conserved ciliary trafficking pathway.

The protein resides in the cell membrane. Odorant receptor which mediates acceptance or avoidance behavior, depending on its substrates. The odorant receptor repertoire encodes a large collection of odor stimuli that vary widely in identity, intensity, and duration. May form a complex with Orco to form odorant-sensing units, providing sensitive and prolonged odorant signaling and calcium permeability. The chain is Odorant receptor 94b (Or94b) from Drosophila melanogaster (Fruit fly).